Reading from the N-terminus, the 125-residue chain is Small ribosomal subunit protein uS12 (125 aa).

The residue at position 89 (D89) is a 3-methylthioaspartic acid.

Belongs to the universal ribosomal protein uS12 family. Part of the 30S ribosomal subunit. Contacts proteins S8 and S17. May interact with IF1 in the 30S initiation complex.

Its function is as follows. With S4 and S5 plays an important role in translational accuracy. Functionally, interacts with and stabilizes bases of the 16S rRNA that are involved in tRNA selection in the A site and with the mRNA backbone. Located at the interface of the 30S and 50S subunits, it traverses the body of the 30S subunit contacting proteins on the other side and probably holding the rRNA structure together. The combined cluster of proteins S8, S12 and S17 appears to hold together the shoulder and platform of the 30S subunit. The chain is Small ribosomal subunit protein uS12 from Cupriavidus pinatubonensis (strain JMP 134 / LMG 1197) (Cupriavidus necator (strain JMP 134)).